The sequence spans 407 residues: Probable endo-beta-1,4-glucanase celB (407 aa).

An N-terminal signal peptide occupies residues 1 to 18 (MAQTLAAASLVLVPLVTA). An N-linked (GlcNAc...) asparagine glycan is attached at Asn-136. The active-site Nucleophile is the Glu-216. The Proton donor role is filled by Glu-221.

The protein belongs to the glycosyl hydrolase 7 (cellulase C) family.

The protein resides in the secreted. It catalyses the reaction Endohydrolysis of (1-&gt;4)-beta-D-glucosidic linkages in cellulose, lichenin and cereal beta-D-glucans.. Its function is as follows. Has endoglucanase activity on substrates containing beta-1,4 glycosidic bonds, like in carboxymethylcellulose (CMC), hydroxyethylcellulose (HEC) and beta-glucan. Involved in the degradation of complex natural cellulosic substrates. This Aspergillus fumigatus (strain ATCC MYA-4609 / CBS 101355 / FGSC A1100 / Af293) (Neosartorya fumigata) protein is Probable endo-beta-1,4-glucanase celB (celB).